Consider the following 146-residue polypeptide: Meiotically up-regulated gene 96 protein (146 aa).

Residues 85–104 (LIRYSLILTCLVAILLSVLW) form a helical membrane-spanning segment.

Its subcellular location is the cytoplasm. The protein resides in the membrane. In terms of biological role, has a role in meiosis. This is Meiotically up-regulated gene 96 protein (mug96) from Schizosaccharomyces pombe (strain 972 / ATCC 24843) (Fission yeast).